Consider the following 377-residue polypeptide: Chaperone protein DnaJ (377 aa).

Residues 4–69 (DYYEALGVER…QKRAAYDRFG (66 aa)) enclose the J domain. The CR-type zinc finger occupies 135–213 (GKTAQIRVPT…CHGQGRVTQE (79 aa)). Cysteine 148, cysteine 151, cysteine 165, cysteine 168, cysteine 187, cysteine 190, cysteine 201, and cysteine 204 together coordinate Zn(2+). CXXCXGXG motif repeat units follow at residues 148–155 (CDECSGSG), 165–172 (CTMCSGSG), 187–194 (CPTCNGRG), and 201–208 (CGKCHGQG).

The protein belongs to the DnaJ family. As to quaternary structure, homodimer. It depends on Zn(2+) as a cofactor.

Its subcellular location is the cytoplasm. Participates actively in the response to hyperosmotic and heat shock by preventing the aggregation of stress-denatured proteins and by disaggregating proteins, also in an autonomous, DnaK-independent fashion. Unfolded proteins bind initially to DnaJ; upon interaction with the DnaJ-bound protein, DnaK hydrolyzes its bound ATP, resulting in the formation of a stable complex. GrpE releases ADP from DnaK; ATP binding to DnaK triggers the release of the substrate protein, thus completing the reaction cycle. Several rounds of ATP-dependent interactions between DnaJ, DnaK and GrpE are required for fully efficient folding. Also involved, together with DnaK and GrpE, in the DNA replication of plasmids through activation of initiation proteins. The protein is Chaperone protein DnaJ of Brucella anthropi (strain ATCC 49188 / DSM 6882 / CCUG 24695 / JCM 21032 / LMG 3331 / NBRC 15819 / NCTC 12168 / Alc 37) (Ochrobactrum anthropi).